The sequence spans 96 residues: Co-chaperonin GroES (96 aa).

The protein belongs to the GroES chaperonin family. In terms of assembly, heptamer of 7 subunits arranged in a ring. Interacts with the chaperonin GroEL.

Its subcellular location is the cytoplasm. In terms of biological role, together with the chaperonin GroEL, plays an essential role in assisting protein folding. The GroEL-GroES system forms a nano-cage that allows encapsulation of the non-native substrate proteins and provides a physical environment optimized to promote and accelerate protein folding. GroES binds to the apical surface of the GroEL ring, thereby capping the opening of the GroEL channel. The chain is Co-chaperonin GroES from Buchnera aphidicola subsp. Myzus persicae (Myzus persicae primary endosymbiont).